The chain runs to 469 residues: Pentatricopeptide repeat-containing protein At2g34370, mitochondrial (469 aa).

The transit peptide at 1-65 (MVRLVCSRIL…QNRSFVQCRR (65 aa)) directs the protein to the mitochondrion. PPR repeat units follow at residues 142–172 (DARS…MPKR), 173–207 (NSET…GNKP), 208–238 (DKEI…MYRD), and 244–274 (SMED…MTVE). The type DYW motif stretch occupies residues 375-469 (DIGFVPATRV…NGVCSCKDYW (95 aa)).

It belongs to the PPR family. PCMP-H subfamily.

The protein resides in the mitochondrion. In Arabidopsis thaliana (Mouse-ear cress), this protein is Pentatricopeptide repeat-containing protein At2g34370, mitochondrial (PCMP-H25).